The sequence spans 119 residues: uncharacterized protein (119 aa).

This is an uncharacterized protein from Saccharomyces cerevisiae (strain ATCC 204508 / S288c) (Baker's yeast).